The sequence spans 235 residues: MFDPFLEELLSGIKARGAVPVEVPHGLEHNQSSKRSSTIKSWLWDVPGFRRWRVTRLDAGDSLQVLNSVAYPDYTYDHPLMGVDLLWFGAKQKLVAVLDFQPLVQDKDYLERYFDGLKSLNAQFPDLNGEETMRSFDPNQYFSSWLLFCRGGAEQATSSLPTAFSAFLKTYWDLHDKAVKIPSSINPIEVAQLQKNYDIYSAERDPAHGLFTSHFGSEWSDRFLHEFLFPASQPK.

This sequence belongs to the HY2 family.

The catalysed reaction is 15,16-dihydrobiliverdin + oxidized 2[4Fe-4S]-[ferredoxin] = biliverdin IXalpha + reduced 2[4Fe-4S]-[ferredoxin] + 2 H(+). Functionally, catalyzes the two-electron reduction of biliverdin IX-alpha at the C15 methine bridge. The polypeptide is 15,16-dihydrobiliverdin:ferredoxin oxidoreductase (Synechococcus sp. (strain CC9605)).